The primary structure comprises 346 residues: N-acetyl-gamma-glutamyl-phosphate reductase (346 aa).

Cysteine 149 is a catalytic residue.

This sequence belongs to the NAGSA dehydrogenase family. Type 1 subfamily.

The protein resides in the cytoplasm. It carries out the reaction N-acetyl-L-glutamate 5-semialdehyde + phosphate + NADP(+) = N-acetyl-L-glutamyl 5-phosphate + NADPH + H(+). It functions in the pathway amino-acid biosynthesis; L-arginine biosynthesis; N(2)-acetyl-L-ornithine from L-glutamate: step 3/4. Functionally, catalyzes the NADPH-dependent reduction of N-acetyl-5-glutamyl phosphate to yield N-acetyl-L-glutamate 5-semialdehyde. This is N-acetyl-gamma-glutamyl-phosphate reductase from Oceanobacillus iheyensis (strain DSM 14371 / CIP 107618 / JCM 11309 / KCTC 3954 / HTE831).